A 486-amino-acid polypeptide reads, in one-letter code: ATP-dependent rRNA helicase RRP3 (486 aa).

The interval 1-58 (MNGAKRRKVAQDTPRNTKPVAQEKPARAEPKPSSDEESEEESATLEEPSAEETAVDAP) is disordered. The span at 24-34 (KPARAEPKPSS) shows a compositional bias: basic and acidic residues. A compositionally biased stretch (acidic residues) spans 35-54 (DEESEEESATLEEPSAEETA). Positions 60–88 (KTFKDLGVNDALCEACEKLNYKYPTPIQE) match the Q motif motif. The 172-residue stretch at 91–262 (IPVALQGRDI…RASLRDPVKV (172 aa)) folds into the Helicase ATP-binding domain. An ATP-binding site is contributed by 104 to 111 (AETGSGKT). Positions 210-213 (DEAD) match the DEAD box motif. The Helicase C-terminal domain maps to 286 to 434 (QKDVHLIYLI…EYPTEKEEVM (149 aa)). 2 stretches are compositionally biased toward basic and acidic residues: residues 451–460 (MKSFTEERGK) and 476–486 (RGRDDMDREEG). Positions 451–486 (MKSFTEERGKKGSTLKGGRGKKGGKRGRDDMDREEG) are disordered.

It belongs to the DEAD box helicase family. DDX47/RRP3 subfamily. In terms of assembly, interacts with the SSU processome.

It is found in the nucleus. It carries out the reaction ATP + H2O = ADP + phosphate + H(+). ATP-dependent rRNA helicase required for pre-ribosomal RNA processing. Involved in the maturation of the 35S-pre-rRNA and to its cleavage to mature 18S rRNA. This Gibberella zeae (strain ATCC MYA-4620 / CBS 123657 / FGSC 9075 / NRRL 31084 / PH-1) (Wheat head blight fungus) protein is ATP-dependent rRNA helicase RRP3.